Here is a 101-residue protein sequence, read N- to C-terminus: Olivetolic acid cyclase (101 aa).

A Stress-response A/B barrel domain is found at 3 to 97 (VKHLIVLKFK…FWEKLLIFDY (95 aa)). Residue His-5 participates in 3,5,7-trioxododecanoyl-CoA binding. Mg(2+)-binding residues include Val-31, Ile-34, and Met-37. Residue Tyr-72 participates in 3,5,7-trioxododecanoyl-CoA binding. Residues Tyr-72 and His-75 each act as acid/base catalyst in the active site.

Homodimer. As to expression, expressed in glandular trichomes and at lower levels in female flowers.

Its subcellular location is the cytoplasm. It catalyses the reaction 3,5,7-trioxododecanoyl-CoA = olivetolate + CoA + H(+). The protein operates within secondary metabolite biosynthesis; terpenoid biosynthesis. Involved in the biosynthesis of cannabinoids-related terpenophenolic natural products, which have pharmacological activity. Polyketide cyclase which functions in concert with OLS/TKS to form olivetolic acid. Has no intrinsic polyketide synthase activity and requires the presence of OLS to produce olivetolic acid. The protein is Olivetolic acid cyclase of Cannabis sativa (Hemp).